A 367-amino-acid chain; its full sequence is UDP-N-acetylglucosamine--N-acetylmuramyl-(pentapeptide) pyrophosphoryl-undecaprenol N-acetylglucosamine transferase (367 aa).

UDP-N-acetyl-alpha-D-glucosamine contacts are provided by residues T15–G17, N127, R163, S191, I249, and Q294.

This sequence belongs to the glycosyltransferase 28 family. MurG subfamily.

It is found in the cell inner membrane. The enzyme catalyses di-trans,octa-cis-undecaprenyl diphospho-N-acetyl-alpha-D-muramoyl-L-alanyl-D-glutamyl-meso-2,6-diaminopimeloyl-D-alanyl-D-alanine + UDP-N-acetyl-alpha-D-glucosamine = di-trans,octa-cis-undecaprenyl diphospho-[N-acetyl-alpha-D-glucosaminyl-(1-&gt;4)]-N-acetyl-alpha-D-muramoyl-L-alanyl-D-glutamyl-meso-2,6-diaminopimeloyl-D-alanyl-D-alanine + UDP + H(+). The protein operates within cell wall biogenesis; peptidoglycan biosynthesis. Cell wall formation. Catalyzes the transfer of a GlcNAc subunit on undecaprenyl-pyrophosphoryl-MurNAc-pentapeptide (lipid intermediate I) to form undecaprenyl-pyrophosphoryl-MurNAc-(pentapeptide)GlcNAc (lipid intermediate II). This Burkholderia multivorans (strain ATCC 17616 / 249) protein is UDP-N-acetylglucosamine--N-acetylmuramyl-(pentapeptide) pyrophosphoryl-undecaprenol N-acetylglucosamine transferase.